A 550-amino-acid polypeptide reads, in one-letter code: Chaperonin GroEL (550 aa).

Residues 30-33 (TLGP), Lys-51, 87-91 (DGTTT), Gly-415, 479-481 (NAA), and Asp-495 contribute to the ATP site.

Belongs to the chaperonin (HSP60) family. In terms of assembly, forms a cylinder of 14 subunits composed of two heptameric rings stacked back-to-back. Interacts with the co-chaperonin GroES.

It is found in the cytoplasm. The catalysed reaction is ATP + H2O + a folded polypeptide = ADP + phosphate + an unfolded polypeptide.. Together with its co-chaperonin GroES, plays an essential role in assisting protein folding. The GroEL-GroES system forms a nano-cage that allows encapsulation of the non-native substrate proteins and provides a physical environment optimized to promote and accelerate protein folding. This chain is Chaperonin GroEL, found in Marinobacter nauticus (strain ATCC 700491 / DSM 11845 / VT8) (Marinobacter aquaeolei).